A 637-amino-acid polypeptide reads, in one-letter code: Chaperone protein HtpG (637 aa).

The tract at residues 1–334 is a; substrate-binding; that stretch reads MQDVVNSEKL…SSDLPLNISR (334 aa). The interval 335-558 is b; it reads ETLQNNKVIE…DGSMDIRMER (224 aa). Residues 559–637 are c; that stretch reads FLREQKQLNY…MNNVLVKVYQ (79 aa).

The protein belongs to the heat shock protein 90 family. Homodimer.

It is found in the cytoplasm. In terms of biological role, molecular chaperone. Has ATPase activity. This chain is Chaperone protein HtpG, found in Ehrlichia canis (strain Jake).